The chain runs to 307 residues: MATH domain and coiled-coil domain-containing protein At3g58380 (307 aa).

An MATH domain is found at 6–132 (DKKFVWVIKD…CREITIVIEV (127 aa)). Residues 238-290 (KVDWLEKKLKEVKEKKKNVDNGKARLQQIEEDLQKLNQKRLDLKDILDKEKAN) adopt a coiled-coil conformation.

The sequence is that of MATH domain and coiled-coil domain-containing protein At3g58380 from Arabidopsis thaliana (Mouse-ear cress).